A 210-amino-acid chain; its full sequence is Acyl-homoserine-lactone synthase (210 aa).

The protein belongs to the autoinducer synthase family.

It catalyses the reaction a fatty acyl-[ACP] + S-adenosyl-L-methionine = an N-acyl-L-homoserine lactone + S-methyl-5'-thioadenosine + holo-[ACP] + H(+). Functionally, required for the synthesis of OHHL (N-(3-oxohexanoyl)-L-homoserine lactone), an autoinducer molecule which binds to EsaR. OHHL is necessary for biosynthesis of EPS virulence factor (extracellular heteropolysaccharide) which plays a role in the development of Stewart's wilt on sweet corn. The chain is Acyl-homoserine-lactone synthase (esaI) from Pantoea stewartii subsp. stewartii (Erwinia stewartii).